The following is a 403-amino-acid chain: Na(+)/H(+) antiporter NhaH (403 aa).

The Cytoplasmic segment spans residues 1–6 (MHGFHD). A helical transmembrane segment spans residues 7–27 (VFIQILLLLAISVSVIAIAKL). The Extracellular portion of the chain corresponds to 28-30 (LKE). The chain crosses the membrane as a helical span at residues 31–51 (PDSIALVLVGLVLGLTELPII). Topologically, residues 52 to 65 (EDAERYITQSEVFQ) are cytoplasmic. The helical transmembrane segment at 66–86 (ATIISLFLPILLGDATLKLPF) threads the bilayer. The Extracellular segment spans residues 87 to 98 (HHLFSQKKTVLG). A helical membrane pass occupies residues 99-119 (LAFVGTFVSSICIGTAAYFLL). At 120-124 (DLPLA) the chain is on the cytoplasmic side. Residues 125-145 (VAFTFAALMSATDPISVLSIF) traverse the membrane as a helical segment. Residues 146-167 (KSLGVPQKMSTVMEGESLFNDG) are Extracellular-facing. A helical transmembrane segment spans residues 168-188 (IAVVLFKIASIYLLTYMEMGW). Residues 189-195 (AGLGSGV) are Cytoplasmic-facing. Residues 196–216 (FLFLKFAIGGALVGLVLGYFF) traverse the membrane as a helical segment. The Extracellular segment spans residues 217-218 (SQ). A helical transmembrane segment spans residues 219-239 (VIRVFDDYPLEVAFSALLFFG). At 240-241 (SY) the chain is on the cytoplasmic side. A helical transmembrane segment spans residues 242-262 (FIAEHFHTSGVIAVVVGGFVF). At 263 to 281 (GDYGAKIGMSKETKTNINT) the chain is on the extracellular side. Residues 282–302 (FWDSVTLIANALIFLMVGLEI) traverse the membrane as a helical segment. Residues 303–310 (RNIDLAGN) lie on the Cytoplasmic side of the membrane. Residues 311–331 (WGVIVGAILIVLVGRTIAVYL) traverse the membrane as a helical segment. The Extracellular portion of the chain corresponds to 332-372 (GTGWVQELSSKERLLINWGGLRGSLSVALALSLPMDFAGRD). A helical transmembrane segment spans residues 373-393 (QVLLLTFSVVLFSLIVQGLTL). Over 394-403 (KPLIKKLGMI) the chain is Cytoplasmic.

This sequence belongs to the monovalent cation:proton antiporter 1 (CPA1) transporter (TC 2.A.36) family.

Its subcellular location is the cell membrane. Functionally, na(+)/H(+) antiporter that extrudes sodium in exchange for external protons. Can also transport lithium. In Halobacillus dabanensis, this protein is Na(+)/H(+) antiporter NhaH (nhaH).